We begin with the raw amino-acid sequence, 188 residues long: Elongation factor P-like protein (188 aa).

Belongs to the elongation factor P family.

The sequence is that of Elongation factor P-like protein from Vibrio vulnificus (strain CMCP6).